The following is a 270-amino-acid chain: Type III pantothenate kinase (270 aa).

Position 6–13 (6–13 (DAGNTNIV)) interacts with ATP. 107 to 110 (GADR) is a substrate binding site. Asp-109 (proton acceptor) is an active-site residue. Asp-129 contributes to the K(+) binding site. Thr-132 is a binding site for ATP. Thr-184 serves as a coordination point for substrate.

Belongs to the type III pantothenate kinase family. Homodimer. The cofactor is NH4(+). Requires K(+) as cofactor.

The protein resides in the cytoplasm. It carries out the reaction (R)-pantothenate + ATP = (R)-4'-phosphopantothenate + ADP + H(+). It participates in cofactor biosynthesis; coenzyme A biosynthesis; CoA from (R)-pantothenate: step 1/5. In terms of biological role, catalyzes the phosphorylation of pantothenate (Pan), the first step in CoA biosynthesis. The protein is Type III pantothenate kinase of Gluconobacter oxydans (strain 621H) (Gluconobacter suboxydans).